Here is a 361-residue protein sequence, read N- to C-terminus: Cobalt-precorrin-5B C(1)-methyltransferase (361 aa).

Belongs to the CbiD family.

It carries out the reaction Co-precorrin-5B + S-adenosyl-L-methionine = Co-precorrin-6A + S-adenosyl-L-homocysteine. It functions in the pathway cofactor biosynthesis; adenosylcobalamin biosynthesis; cob(II)yrinate a,c-diamide from sirohydrochlorin (anaerobic route): step 6/10. Its function is as follows. Catalyzes the methylation of C-1 in cobalt-precorrin-5B to form cobalt-precorrin-6A. In Methylorubrum extorquens (strain CM4 / NCIMB 13688) (Methylobacterium extorquens), this protein is Cobalt-precorrin-5B C(1)-methyltransferase.